The chain runs to 456 residues: MDVCLSYSYNMDDEIAKFIRRVNPPRVVIDNEVCKDVTVIKVDSANKHGILLEVVQVLTELNLTIKKAYISSDGGWFMDVFNVTDQDGNKVTDEIVLEYIRKSLGPDESSCFSPSMRSTIGVKQSVDYTVVELTGTDRPGLLSELCAVLMDLQCNVVNAEIWTHRAKAAAVLQVTDEETCSAITDPERLSKIRKLLGYVLTGGSSGRRFREPKTTVSSALNETHTDRKLHQLMFADRDYDEWENNVDDEDKCGRVIPDVDVSNLHDLDYSIVMIKCKDRPKLLFDTVFTLTDMNYVVSHASIDAEGPQAYQEYYIRHTDGSPVKSEAERQRVIKCLKAAIQRRVSEGLKLELCTSDRVGLLSDVTRIFRENSLTVTRAEVKTKGDKALNTFYVRDASGYQVDTKTIESIRQVIGQTILQVKGGNTDAKPSPQDSPTGFLFGVFKSRSFVNFGLIRS.

4 consecutive ACT domains span residues 39–115 (VIKV…FSPS), 130–207 (VVEL…SSGR), 271–347 (IVMI…VSEG), and 349–432 (KLEL…PSPQ).

As to expression, expressed in stems and siliques.

May bind amino acids. The protein is ACT domain-containing protein ACR5 of Arabidopsis thaliana (Mouse-ear cress).